The following is a 177-amino-acid chain: R-phycoerythrin beta chain (177 aa).

Residues N35 and D39 each coordinate (2R,3E)-phycoerythrobilin. The phycourobilin site is built by C50, D54, and C61. Residues N72, 77–78 (RR), C82, and 84–85 (RD) contribute to the (2R,3E)-phycoerythrobilin site. The residue at position 72 (N72) is an N4-methylasparagine. Residue 147 to 148 (SG) participates in phycourobilin binding. Residue C158 coordinates (2R,3E)-phycoerythrobilin.

Belongs to the phycobiliprotein family. As to quaternary structure, heterododecamer of 6 alpha and 6 beta chains. The basic functional unit of phycobiliproteins is a ring-shaped hexamer formed from two back-to-back trimers contacting via the alpha chain subunits. The trimers are composed of alpha/beta subunit heterodimers arranged around a three-fold axis of symmetry. The phycoerythrins also contain a gamma subunit which is located in the center of the hexamer. In terms of processing, contains two covalently linked phycoerythrobilin chromophores and one covalently linked phycourobilin chromophore.

It localises to the plastid. Its subcellular location is the chloroplast thylakoid membrane. Light-harvesting photosynthetic tetrapyrrole chromophore-protein from the phycobiliprotein complex. The protein is R-phycoerythrin beta chain (cpeB) of Griffithsia monilis (Red alga).